The following is a 182-amino-acid chain: Plasmolipin (182 aa).

Residues 1 to 20 form a disordered region; it reads MAEFPSKVSTRTSSPAQGVG. Over 1–35 the chain is Cytoplasmic; sequence MAEFPSKVSTRTSSPAQGVGASVSAMRPDLGFVRS. The span at 7-16 shows a compositional bias: polar residues; the sequence is KVSTRTSSPA. Serine 9 bears the Phosphoserine mark. Residues 32-166 form the MARVEL domain; sequence FVRSALGVLA…SAFFSFQAWR (135 aa). The chain crosses the membrane as a helical span at residues 36–56; that stretch reads ALGVLALLQLVLGLLVWALIA. Over 57-68 the chain is Extracellular; that stretch reads DTPYHLYPAYGW. The helical transmembrane segment at 69-89 threads the bilayer; the sequence is VMFVAVFLWLVTIVFFIIYLF. The Cytoplasmic portion of the chain corresponds to 90 to 99; the sequence is QLHMKLYMVP. The chain crosses the membrane as a helical span at residues 100 to 120; it reads WPLVLLVFFVAATVLYITAFV. The Extracellular portion of the chain corresponds to 121–141; the sequence is ACAAAVDLTSLRGSRPYNQRS. Residues 142–162 form a helical membrane-spanning segment; that stretch reads AASFFACLVMIAYGLSAFFSF. Over 163–182 the chain is Cytoplasmic; sequence QAWRGVGSNAATSQMAGGYS.

It belongs to the MAL family. As to quaternary structure, forms oligomers. In terms of processing, phosphorylated. In terms of tissue distribution, detected to the sciatic nerve, brain and kidney. In the sciatic nerve, found in Schwann cells; in the brain, in developing oligodendrocytes, especially of the corpus callosum, of cortical white matter, in the optic nerve and in the stratum radiatum and stratum oriens of the hippocampus. In kidney, segregated to the apical surface of renal tubular epithelia.

The protein resides in the cell membrane. The protein localises to the myelin membrane. It is found in the apical cell membrane. Main component of the myelin sheath that plays an important role in myelin membrane biogenesis and myelination. Plays an essential function in apical endocytosis. Regulates epithelial development through the regulation of apical endocytosis. Part of the intracellular machinery that mediates basolateral-to-apical transport of ICAM-1, an essential adhesion receptor in epithelial cells, from the subapical compartment in hepatic epithelial cells. This Rattus norvegicus (Rat) protein is Plasmolipin (Pllp).